The primary structure comprises 302 residues: Probable alpha-L-glutamate ligase (302 aa).

Residues 104 to 287 (LQLLSRKGLG…IAGQIIEYIE (184 aa)) form the ATP-grasp domain. ATP is bound by residues K141, 178–179 (EY), D187, and 211–213 (RSN). Mg(2+)-binding residues include D248, E260, and N262. Positions 248, 260, and 262 each coordinate Mn(2+).

The protein belongs to the RimK family. The cofactor is Mg(2+). Mn(2+) serves as cofactor.

This is Probable alpha-L-glutamate ligase from Chromohalobacter salexigens (strain ATCC BAA-138 / DSM 3043 / CIP 106854 / NCIMB 13768 / 1H11).